The following is an 882-amino-acid chain: Ion channel DMI1 (882 aa).

Positions 1–122 (MAKSNEESSN…PSSSSITKQQ (122 aa)) are disordered. Residues 48-62 (TSTTKTDFSEQQWNY) show a composition bias toward polar residues. Residues 78 to 95 (PPPPPSKPPVNLIPPHPR) are compositionally biased toward pro residues. Over residues 107-117 (SSLLPQPSSSS) the composition is skewed to low complexity. 4 consecutive transmembrane segments (helical) span residues 129-149 (SPIF…SAYL), 192-212 (TIAL…YKYL), 255-275 (LALL…LYAV), and 307-327 (IVSV…LGLV). RCK N-terminal domains are found at residues 348 to 489 (RNHV…ETVV) and 608 to 757 (PEKI…DKSI). A coiled-coil region spans residues 378–403 (VIVVLAEKEKEEMEMDIAKLEFDFMG).

Belongs to the castor/pollux (TC 1.A.1.23) family. In terms of assembly, interacts (via c-terminus) with CNGC15A, CNGC15B and CNGC15C (via N-terminus). The Nod factor has no effect on these interactions, implying that the complex is maintained after activation. In terms of tissue distribution, mainly expressed in roots and nodules. Also detected in pods, flowers, leaves, and stems.

Its subcellular location is the nucleus membrane. Its function is as follows. Required for early signal transduction events leading to endosymbiosis. Acts early in a signal transduction chain leading from the perception of Nod factor to the activation of calcium spiking. Also involved in mycorrhizal symbiosis. May be involved in the regulation of the calcium channel responsible for calcium spiking by mobilizing another cation, and thereby altering the membrane potential. The sequence is that of Ion channel DMI1 from Medicago truncatula (Barrel medic).